The primary structure comprises 168 residues: Phosphopantetheine adenylyltransferase (168 aa).

Residue Ser-8 participates in substrate binding. ATP contacts are provided by residues 8–9 (SF) and His-16. Substrate-binding residues include Lys-40, Thr-72, and Arg-86. Residues 87 to 89 (GLR), Glu-97, and 122 to 128 (YSFLSSS) each bind ATP.

It belongs to the bacterial CoaD family. As to quaternary structure, homohexamer. Mg(2+) serves as cofactor.

It is found in the cytoplasm. The enzyme catalyses (R)-4'-phosphopantetheine + ATP + H(+) = 3'-dephospho-CoA + diphosphate. It functions in the pathway cofactor biosynthesis; coenzyme A biosynthesis; CoA from (R)-pantothenate: step 4/5. Functionally, reversibly transfers an adenylyl group from ATP to 4'-phosphopantetheine, yielding dephospho-CoA (dPCoA) and pyrophosphate. In Thermosynechococcus vestitus (strain NIES-2133 / IAM M-273 / BP-1), this protein is Phosphopantetheine adenylyltransferase.